Reading from the N-terminus, the 268-residue chain is Zinc import ATP-binding protein ZnuC (268 aa).

The ABC transporter domain maps to 16–231; sequence IQLKNINVVF…PTFMRLWGNQ (216 aa). Residue 48–55 coordinates ATP; the sequence is GPNGGGKS.

This sequence belongs to the ABC transporter superfamily. Zinc importer (TC 3.A.1.15.5) family. In terms of assembly, the complex is composed of two ATP-binding proteins (ZnuC), two transmembrane proteins (ZnuB) and a solute-binding protein (ZnuA).

Its subcellular location is the cell inner membrane. The enzyme catalyses Zn(2+)(out) + ATP(in) + H2O(in) = Zn(2+)(in) + ADP(in) + phosphate(in) + H(+)(in). In terms of biological role, part of the ABC transporter complex ZnuABC involved in zinc import. Responsible for energy coupling to the transport system. This chain is Zinc import ATP-binding protein ZnuC, found in Haemophilus influenzae (strain ATCC 51907 / DSM 11121 / KW20 / Rd).